Reading from the N-terminus, the 205-residue chain is Holliday junction branch migration complex subunit RuvA (205 aa).

The domain I stretch occupies residues 1 to 64 (MIGKLRGLID…EDQIKLFGFR (64 aa)). The domain II stretch occupies residues 65–143 (SDVEREWFRL…AFANVDPGVV (79 aa)). A flexible linker region spans residues 144–154 (RLSGAIEESRA). The domain III stretch occupies residues 154 to 205 (APQPVADAISALINLGYGQPQAAAAIAAASRAAGDKAETAQLIRLGLKELAK).

The protein belongs to the RuvA family. Homotetramer. Forms an RuvA(8)-RuvB(12)-Holliday junction (HJ) complex. HJ DNA is sandwiched between 2 RuvA tetramers; dsDNA enters through RuvA and exits via RuvB. An RuvB hexamer assembles on each DNA strand where it exits the tetramer. Each RuvB hexamer is contacted by two RuvA subunits (via domain III) on 2 adjacent RuvB subunits; this complex drives branch migration. In the full resolvosome a probable DNA-RuvA(4)-RuvB(12)-RuvC(2) complex forms which resolves the HJ.

The protein localises to the cytoplasm. Its function is as follows. The RuvA-RuvB-RuvC complex processes Holliday junction (HJ) DNA during genetic recombination and DNA repair, while the RuvA-RuvB complex plays an important role in the rescue of blocked DNA replication forks via replication fork reversal (RFR). RuvA specifically binds to HJ cruciform DNA, conferring on it an open structure. The RuvB hexamer acts as an ATP-dependent pump, pulling dsDNA into and through the RuvAB complex. HJ branch migration allows RuvC to scan DNA until it finds its consensus sequence, where it cleaves and resolves the cruciform DNA. This is Holliday junction branch migration complex subunit RuvA from Bradyrhizobium sp. (strain ORS 278).